The primary structure comprises 702 residues: Kinesin-like protein KIF3A (702 aa).

The region spanning 14 to 345 (NVKVVVRCRP…LRYANRAKNI (332 aa)) is the Kinesin motor domain. Position 100–107 (100–107 (GQTGTGKT)) interacts with ATP. Residues 355 to 593 (PKDALLRQFQ…LSRELRLQML (239 aa)) adopt a coiled-coil conformation. 2 disordered regions span residues 372–424 (KKLE…KMIE) and 667–702 (LMKLERPRTSKGKARPKTGRRKRSAKPETVIDSLLQ). A compositionally biased stretch (acidic residues) spans 376 to 400 (EGEEISGSDISGSEEDDDEEGEVGE). Residues 410-424 (DQAGKKKVSPDKMIE) show a composition bias toward basic and acidic residues. Residues 600-702 (PRDYQEMIEN…PETVIDSLLQ (103 aa)) form a globular region. Positions 675 to 690 (TSKGKARPKTGRRKRS) are enriched in basic residues. Residue Ser-690 is modified to Phosphoserine.

It belongs to the TRAFAC class myosin-kinesin ATPase superfamily. Kinesin family. Kinesin II subfamily. As to quaternary structure, heterodimer of KIF3A and KIF3B. Interacts with CIMAP3. Interacts with CLN3. Interacts with DCTN1. Interacts with FLCN. Interacts with AP3B1.

It localises to the cytoplasm. It is found in the cytoskeleton. Its subcellular location is the cell projection. The protein localises to the cilium. The protein resides in the microtubule organizing center. It localises to the centrosome. It is found in the centriole. Its function is as follows. Microtubule-based anterograde translocator for membranous organelles. Plus end-directed microtubule sliding activity in vitro. Plays a role in primary cilia formation. Plays a role in centriole cohesion and subdistal appendage organization and function. Regulates the formation of the subdistal appendage via recruitment of DCTN1 to the centriole. Also required for ciliary basal feet formation and microtubule anchoring to mother centriole. The polypeptide is Kinesin-like protein KIF3A (KIF3A) (Macaca fascicularis (Crab-eating macaque)).